The chain runs to 318 residues: Ankyrin repeat and SOCS box protein 7 (318 aa).

ANK repeat units follow at residues 13–42, 46–75, 80–109, 116–145, 149–178, 180–208, and 213–242; these read QEELQIQAAVAAGDVHTVRKMLEQGYSPNG, NGWTLLHFSAARGKERCVRVFLEHGADPTV, GGFTALHYAAMHGRARIARLMLESEYRSDI, DGWTPLHVAAHYGRDSFVRLLLEFKAEVDP, KGTTPLQLAIIRERSSCVKILLDHNANIDI, NGFLLRYAVIKSNHSYCRMFLQRGADTNL, and DGQTPLHLSALRDDVLCARMLYNYGADTNT. The SOCS box domain occupies 265 to 318; sequence LDFLQEVTRQPRNLQDLCRIKIRQCIGLQNLKLLDELPIAKVMKDYLKHKFDDI.

It belongs to the ankyrin SOCS box (ASB) family. In terms of assembly, interacts with CUL5. Interacts with RNF7. Interacts with PSRC1.

It participates in protein modification; protein ubiquitination. Functionally, probable substrate-recognition component of a SCF-like ECS (Elongin-Cullin-SOCS-box protein) E3 ubiquitin-protein ligase complex which mediates the ubiquitination and subsequent proteasomal degradation of target proteins. Plays a role in spindle dynamics and genome integrity by targeting the mitotic progression protein PSRC1 for proteasomal degradation in a cell cycle-dependent manner. Also participates in meiosis by mediating the proper attachment between kinetochores and microtubules. The sequence is that of Ankyrin repeat and SOCS box protein 7 (ASB7) from Homo sapiens (Human).